We begin with the raw amino-acid sequence, 193 residues long: Cuticle protein 18.7 (193 aa).

In terms of biological role, component of the cuticle of migratory locust which contains more than 100 different structural proteins. The protein is Cuticle protein 18.7 of Locusta migratoria (Migratory locust).